Consider the following 473-residue polypeptide: MVAHRARRRKRASATELYKTCKVAGTCPPDVIPKVEGTTLADRILQWGSLGVYLGGLGIGTGSGTGGRTGYVPVGTRPGTVVDVSIPTRPPVVIEPVGPSDPSIVTLLEESSVINSGATIPTFTGTSGFEITSSATTTPAVLDITPAGDNVVITSTNFNNPLFTEPSLLEIPQTGETSGRVLVGTPTSGVHGYEEIPMDTFATSGTGLEPISSTPVPGVSRVAGPRLYGKALTQVRVSDPAFLTQPSSFVTFDNPVYDPEDETIIFERPSPGTRVPDPDFMDIVKLHRPALTSRRGTVRFSRVGQKFSMRTRSGTNIGARVHYYHDLSPILPTEDIELEPLLPPADPTAEESLYDIYADVDEADMAFTGGGRGATTYGGRITPSVFSSTLSTRYGNVTIPFVSPVDVPLHTGPDIILPSSAQWPFVPVAPADTTHYVYIDGGDYFLWPVTFPVSRKRRRKRLSYFLADGFVAL.

The Nuclear localization signal motif lies at 1–12 (MVAHRARRRKRA). A disulfide bridge links C21 with C27. A Nuclear localization signal motif is present at residues 452–462 (PVSRKRRRKRL).

It belongs to the papillomaviridae L2 protein family. In terms of assembly, interacts with major capsid protein L1. Interacts with E2; this interaction inhibits E2 transcriptional activity but not the DNA replication function E2. Interacts with host GADD45GIP1. Interacts with host HSPA8; this interaction is required for L2 nuclear translocation. Interacts with host importins KPNB2 and KPNB3. Forms a complex with importin alpha2-beta1 heterodimers via interaction with the importin alpha2 adapter. Interacts with host DYNLT1; this interaction is essential for virus intracellular transport during entry. Interacts (via C-terminus) with host retromer subunits VPS35 and VPS29. In terms of processing, highly phosphorylated.

It localises to the virion. It is found in the host nucleus. Its subcellular location is the host early endosome. The protein resides in the host Golgi apparatus. Minor protein of the capsid that localizes along the inner surface of the virion, within the central cavities beneath the L1 pentamers. Plays a role in capsid stabilization through interaction with the major capsid protein L1. Once the virion enters the host cell, L2 escorts the genomic DNA into the nucleus by promoting escape from the endosomal compartments and traffic through the host Golgi network. Mechanistically, the C-terminus of L2 possesses a cell-penetrating peptide that protudes from the host endosome, interacts with host cytoplasmic retromer cargo and thereby mediates the capsid delivery to the host trans-Golgi network. Plays a role through its interaction with host dynein in the intracellular microtubule-dependent transport of viral capsid toward the nucleus. Mediates the viral genome import into the nucleus through binding to host importins. Once within the nucleus, L2 localizes viral genomes to host PML bodies in order to activate early gene expression for establishment of infection. Later on, promotes late gene expression by interacting with the viral E2 protein and by inhibiting its transcriptional activation functions. During virion assembly, encapsidates the genome by direct interaction with the viral DNA. This chain is Minor capsid protein L2, found in Homo sapiens (Human).